Here is a 110-residue protein sequence, read N- to C-terminus: NADH-quinone oxidoreductase subunit K (110 aa).

3 helical membrane-spanning segments follow: residues 14–34 (VSQYFILSFILLGIGLFGMMV), 39–59 (ITILMSLELALNSVNIAFVGI), and 70–90 (IFALFTIALAAAEAAVGLGII).

The protein belongs to the complex I subunit 4L family. In terms of assembly, NDH-1 is composed of 14 different subunits. Subunits NuoA, H, J, K, L, M, N constitute the membrane sector of the complex.

Its subcellular location is the cell inner membrane. The enzyme catalyses a quinone + NADH + 5 H(+)(in) = a quinol + NAD(+) + 4 H(+)(out). Its function is as follows. NDH-1 shuttles electrons from NADH, via FMN and iron-sulfur (Fe-S) centers, to quinones in the respiratory chain. The immediate electron acceptor for the enzyme in this species is believed to be ubiquinone. Couples the redox reaction to proton translocation (for every two electrons transferred, four hydrogen ions are translocated across the cytoplasmic membrane), and thus conserves the redox energy in a proton gradient. This is NADH-quinone oxidoreductase subunit K from Hydrogenobaculum sp. (strain Y04AAS1).